Here is a 166-residue protein sequence, read N- to C-terminus: Endoribonuclease YbeY (166 aa).

Zn(2+) is bound by residues histidine 111, histidine 115, and histidine 121. The segment at 140–166 is disordered; the sequence is ELGYPDPYADDESADPPHSDTPSKDHE. Residues 154 to 166 show a composition bias toward basic and acidic residues; the sequence is DPPHSDTPSKDHE.

Belongs to the endoribonuclease YbeY family. Zn(2+) is required as a cofactor.

The protein resides in the cytoplasm. Functionally, single strand-specific metallo-endoribonuclease involved in late-stage 70S ribosome quality control and in maturation of the 3' terminus of the 16S rRNA. The chain is Endoribonuclease YbeY from Pseudomonas syringae pv. syringae (strain B728a).